The sequence spans 67 residues: MIIPVRCFTCGKIVGNKWEAYLGLLQAEYTEGDALDALGLKRYCCRRMLLAHVDLIEKLLNYAPLEK.

4 residues coordinate Zn(2+): C7, C10, C44, and C45.

The protein belongs to the archaeal Rpo10/eukaryotic RPB10 RNA polymerase subunit family. Component of the RNA polymerase I (Pol I), RNA polymerase II (Pol II) and RNA polymerase III (Pol III) complexes consisting of at least 13, 12 and 17 subunits, respectively. Pol I complex consists of a ten-subunit catalytic core composed of POLR1A/RPA1, POLR1B/RPA2, POLR1C/RPAC1, POLR1D/RPAC2, POLR1H/RPA12, POLR2E/RPABC1, POLR2F/RPABC2, POLR2H/RPABC3, POLR2K/RPABC4 and POLR2L/RPABC5; a mobile stalk subunit POLR1F/RPA43 protruding from the core and additional subunits homologous to general transcription factors POLR1E/RPA49 and POLR1G/RPA34. Part of Pol I pre-initiation complex (PIC), in which Pol I core assembles with RRN3 and promoter-bound UTBF and SL1/TIF-IB complex. Pol II complex contains a ten-subunit catalytic core composed of POLR2A/RPB1, POLR2B/RPB2, POLR2C/RPB3, POLR2I/RPB9, POLR2J/RPB11, POLR2E/RPABC1, POLR2F/RPABC2, POLR2H/RPABC3, POLR2K/RPABC4 and POLR2L/RPABC5 and a mobile stalk composed of two subunits POLR2D/RPB4 and POLR2G/RPB7. Part of Pol II(G) complex, in which Pol II core associates with an additional subunit POLR2M; unlike conventional Pol II, Pol II(G) functions as a transcriptional repressor. Part of TBP-based Pol II pre-initiation complex (PIC), in which Pol II core assembles with general transcription factors and other specific initiation factors including GTF2E1, GTF2E2, GTF2F1, GTF2F2, TCEA1, ERCC2, ERCC3, GTF2H2, GTF2H3, GTF2H4, GTF2H5, GTF2A1, GTF2A2, GTF2B and TBP; this large multi-subunit PIC complex mediates DNA unwinding and targets Pol II core to the transcription start site where the first phosphodiester bond forms. Pol III complex consists of a ten-subunit catalytic core composed of POLR3A/RPC1, POLR3B/RPC2, POLR1C/RPAC1, POLR1D/RPAC2, POLR3K/RPC10, POLR2E/RPABC1, POLR2F/RPABC2, POLR2H/RPABC3, POLR2K/RPABC4 and POLR2L/RPABC5; a mobile stalk composed of two subunits POLR3H/RPC8 and CRCP/RPC9, protruding from the core and functioning primarily in transcription initiation; and additional subunits homologous to general transcription factors of the RNA polymerase II machinery, POLR3C/RPC3-POLR3F/RPC6-POLR3G/RPC7 heterotrimer required for transcription initiation and POLR3D/RPC4-POLR3E/RPC5 heterodimer involved in both transcription initiation and termination.

The protein localises to the nucleus. It is found in the nucleolus. DNA-dependent RNA polymerase catalyzes the transcription of DNA into RNA using the four ribonucleoside triphosphates as substrates. Common component of RNA polymerases I, II and III which synthesize ribosomal RNA precursors, mRNA precursors and many functional non-coding RNAs, and a small RNAs, such as 5S rRNA and tRNAs, respectively. This Bos taurus (Bovine) protein is DNA-directed RNA polymerases I, II, and III subunit RPABC5 (POLR2L).